A 115-amino-acid polypeptide reads, in one-letter code: NAD(P)H-quinone oxidoreductase subunit M (115 aa).

This sequence belongs to the complex I NdhM subunit family. NDH-1 can be composed of about 15 different subunits; different subcomplexes with different compositions have been identified which probably have different functions.

It is found in the cellular thylakoid membrane. The enzyme catalyses a plastoquinone + NADH + (n+1) H(+)(in) = a plastoquinol + NAD(+) + n H(+)(out). It catalyses the reaction a plastoquinone + NADPH + (n+1) H(+)(in) = a plastoquinol + NADP(+) + n H(+)(out). NDH-1 shuttles electrons from an unknown electron donor, via FMN and iron-sulfur (Fe-S) centers, to quinones in the respiratory and/or the photosynthetic chain. The immediate electron acceptor for the enzyme in this species is believed to be plastoquinone. Couples the redox reaction to proton translocation, and thus conserves the redox energy in a proton gradient. Cyanobacterial NDH-1 also plays a role in inorganic carbon-concentration. In Prochlorococcus marinus (strain AS9601), this protein is NAD(P)H-quinone oxidoreductase subunit M.